We begin with the raw amino-acid sequence, 397 residues long: MAFRTLDDIGDVKGKRVLVREDLNVPMDGDRVTDDTRLRAAIPTVNELAEKGAKVLILAHFGRPKGQPNPEMSLARIKDALAGVLGRPVHFINDIKGEAAAKAVDALNPGAVALLENTRFYAGEEKNDPALAAEVAKLGDFYVNDAFSAAHRAHVSTEGLAHKLPAFAGRAMQKELEALEAALGKPTHPVAAVVGGAKVSTKLDVLTNLVSKVDHLIIGGGMANTFLAAQGVDVGKSLCEHELKDTVKGIFAAAEKTGCKIHLPSDVVVAKEFKANPPIRTIPVSDVAADEMILDVGPKAVAALTEVLKASKTLVWNGPLGAFEIEPFDKATVALAKEAAALTKAGSLISVAGGGDTVAALNHAGVAKDFSFVSTAGGAFLEWMEGKELPGVKALEA.

Residues 22–24, R37, 60–63, R119, and R152 each bind substrate; these read DLN and HFGR. ATP-binding positions include K202, E324, and 354–357; that span reads GGDT.

It belongs to the phosphoglycerate kinase family. Monomer.

It localises to the cytoplasm. It carries out the reaction (2R)-3-phosphoglycerate + ATP = (2R)-3-phospho-glyceroyl phosphate + ADP. It participates in carbohydrate degradation; glycolysis; pyruvate from D-glyceraldehyde 3-phosphate: step 2/5. The polypeptide is Phosphoglycerate kinase (pgk) (Zymomonas mobilis subsp. mobilis (strain ATCC 31821 / ZM4 / CP4)).